The chain runs to 268 residues: Tryptophan synthase alpha chain (268 aa).

Residues Glu-49 and Asp-60 each act as proton acceptor in the active site.

Belongs to the TrpA family. Tetramer of two alpha and two beta chains.

The catalysed reaction is (1S,2R)-1-C-(indol-3-yl)glycerol 3-phosphate + L-serine = D-glyceraldehyde 3-phosphate + L-tryptophan + H2O. It participates in amino-acid biosynthesis; L-tryptophan biosynthesis; L-tryptophan from chorismate: step 5/5. Functionally, the alpha subunit is responsible for the aldol cleavage of indoleglycerol phosphate to indole and glyceraldehyde 3-phosphate. This Yersinia enterocolitica serotype O:8 / biotype 1B (strain NCTC 13174 / 8081) protein is Tryptophan synthase alpha chain.